The following is a 229-amino-acid chain: Small ribosomal subunit protein uS3 (229 aa).

A KH type-2 domain is found at 39 to 107 (IRKFLKKELY…EVFINIKEEK (69 aa)).

This sequence belongs to the universal ribosomal protein uS3 family. Part of the 30S ribosomal subunit. Forms a tight complex with proteins S10 and S14.

In terms of biological role, binds the lower part of the 30S subunit head. Binds mRNA in the 70S ribosome, positioning it for translation. The sequence is that of Small ribosomal subunit protein uS3 from Nitratiruptor sp. (strain SB155-2).